Here is a 344-residue protein sequence, read N- to C-terminus: Phenylalanine--tRNA ligase alpha subunit (344 aa).

Glu256 is a Mg(2+) binding site.

Belongs to the class-II aminoacyl-tRNA synthetase family. Phe-tRNA synthetase alpha subunit type 1 subfamily. In terms of assembly, tetramer of two alpha and two beta subunits. Mg(2+) serves as cofactor.

The protein localises to the cytoplasm. It carries out the reaction tRNA(Phe) + L-phenylalanine + ATP = L-phenylalanyl-tRNA(Phe) + AMP + diphosphate + H(+). This chain is Phenylalanine--tRNA ligase alpha subunit, found in Shouchella clausii (strain KSM-K16) (Alkalihalobacillus clausii).